We begin with the raw amino-acid sequence, 142 residues long: Group IIE secretory phospholipase A2 (142 aa).

Residues 1 to 19 (MKSPHVLVFLCLLVALVTG) form the signal peptide. Ca(2+)-binding residues include Asp41, Gly43, Tyr45, Gly47, and Gly49. Intrachain disulfides connect Cys44-Cys135, Cys46-Cys62, Cys61-Cys115, Cys67-Cys142, Cys68-Cys108, Cys77-Cys101, and Cys95-Cys106. His65 is an active-site residue. Asp66 serves as a coordination point for Ca(2+). Asp109 is an active-site residue. Tyr130 and Asn132 together coordinate Ca(2+).

This sequence belongs to the phospholipase A2 family. The cofactor is Ca(2+). Restricted to the brain, heart, lung, and placenta.

Its subcellular location is the secreted. It is found in the cytoplasm. The enzyme catalyses a 1,2-diacyl-sn-glycero-3-phosphoethanolamine + H2O = a 1-acyl-sn-glycero-3-phosphoethanolamine + a fatty acid + H(+). It catalyses the reaction 1-hexadecanoyl-2-(9Z-octadecenoyl)-sn-glycero-3-phosphoethanolamine + H2O = 1-hexadecanoyl-sn-glycero-3-phosphoethanolamine + (9Z)-octadecenoate + H(+). The catalysed reaction is 1-hexadecanoyl-2-(9Z,12Z-octadecadienoyl)-sn-glycero-3-phosphoethanolamine + H2O = 1-hexadecanoyl-sn-glycero-3-phosphoethanolamine + (9Z,12Z)-octadecadienoate + H(+). It carries out the reaction 1-hexadecanoyl-2-(5Z,8Z,11Z,14Z-eicosatetraenoyl)-sn-glycero-3-phosphoethanolamine + H2O = 1-hexadecanoyl-sn-glycero-3-phosphoethanolamine + (5Z,8Z,11Z,14Z)-eicosatetraenoate + H(+). The enzyme catalyses 1,2-dihexadecanoyl-sn-glycero-3-phospho-(1'-sn-glycerol) + H2O = 1-hexadecanoyl-sn-glycero-3-phospho-(1'-sn-glycerol) + hexadecanoate + H(+). It catalyses the reaction 1-hexadecanoyl-2-(9Z-octadecenoyl)-sn-glycero-3-phosphoglycerol + H2O = 1-hexadecanoyl-sn-glycero-3-phosphoglycerol + (9Z)-octadecenoate + H(+). The catalysed reaction is a 1,2-diacyl-sn-glycero-3-phosphocholine + H2O = a 1-acyl-sn-glycero-3-phosphocholine + a fatty acid + H(+). It carries out the reaction 1,2-dihexadecanoyl-sn-glycero-3-phosphocholine + H2O = 1-hexadecanoyl-sn-glycero-3-phosphocholine + hexadecanoate + H(+). The enzyme catalyses 1-hexadecanoyl-2-(9Z-octadecenoyl)-sn-glycero-3-phosphocholine + H2O = 1-hexadecanoyl-sn-glycero-3-phosphocholine + (9Z)-octadecenoate + H(+). It catalyses the reaction 1-hexadecanoyl-2-(9Z,12Z-octadecadienoyl)-sn-glycero-3-phosphocholine + H2O = (9Z,12Z)-octadecadienoate + 1-hexadecanoyl-sn-glycero-3-phosphocholine + H(+). The catalysed reaction is 1-hexadecanoyl-2-(4Z,7Z,10Z,13Z,16Z,19Z-docosahexaenoyl)-sn-glycero-3-phosphocholine + H2O = (4Z,7Z,10Z,13Z,16Z,19Z)-docosahexaenoate + 1-hexadecanoyl-sn-glycero-3-phosphocholine + H(+). Functionally, secretory calcium-dependent phospholipase A2 that primarily targets extracellular phospholipids. Hydrolyzes the ester bond of the fatty acyl group attached at sn-2 position of phospholipids (phospholipase A2 activity), releasing various unsaturated fatty acids including oleoate, linoleoate, arachidonate, docosahexaenoate and lysophosphatidylethanolamines in preference to lysophosphatidylcholines. In response to high-fat diet, hydrolyzes minor lipoprotein phospholipids including phosphatidylserines, phosphatidylinositols and phosphatidylglycerols, altering lipoprotein composition and fat storage in adipose tissue and liver. May act in an autocrine and paracrine manner. Contributes to lipid remodeling of cellular membranes and generation of lipid mediators involved in pathogen clearance. Cleaves sn-2 fatty acyl chains of phosphatidylglycerols and phosphatidylethanolamines, which are major components of membrane phospholipids in bacteria. Acts as a hair follicle phospholipase A2. Selectively releases lysophosphatidylethanolamines (LPE) and various unsaturated fatty acids in skin to regulate hair follicle homeostasis. May regulate the inflammatory response by releasing arachidonate, a precursor of prostaglandins and leukotrienes. Upon allergen exposure, may participate in allergic inflammatory response by enhancing leukotriene C4 synthesis and degranulation in mast cells. In Homo sapiens (Human), this protein is Group IIE secretory phospholipase A2 (PLA2G2E).